Reading from the N-terminus, the 356-residue chain is 3-isopropylmalate dehydrogenase (356 aa).

Substrate contacts are provided by arginine 95, arginine 105, arginine 133, and aspartate 223. Mg(2+)-binding residues include aspartate 223, aspartate 247, and aspartate 251. Position 281–293 (281–293 (GSAPDIAGQNKAN)) interacts with NAD(+).

It belongs to the isocitrate and isopropylmalate dehydrogenases family. LeuB type 1 subfamily. As to quaternary structure, homodimer. Mg(2+) serves as cofactor. It depends on Mn(2+) as a cofactor.

The protein localises to the cytoplasm. The enzyme catalyses (2R,3S)-3-isopropylmalate + NAD(+) = 4-methyl-2-oxopentanoate + CO2 + NADH. The protein operates within amino-acid biosynthesis; L-leucine biosynthesis; L-leucine from 3-methyl-2-oxobutanoate: step 3/4. Functionally, catalyzes the oxidation of 3-carboxy-2-hydroxy-4-methylpentanoate (3-isopropylmalate) to 3-carboxy-4-methyl-2-oxopentanoate. The product decarboxylates to 4-methyl-2 oxopentanoate. The chain is 3-isopropylmalate dehydrogenase from Neisseria gonorrhoeae (strain ATCC 700825 / FA 1090).